A 183-amino-acid chain; its full sequence is Translation initiation factor IF-3 (183 aa).

It belongs to the IF-3 family. As to quaternary structure, monomer.

It is found in the cytoplasm. Functionally, IF-3 binds to the 30S ribosomal subunit and shifts the equilibrium between 70S ribosomes and their 50S and 30S subunits in favor of the free subunits, thus enhancing the availability of 30S subunits on which protein synthesis initiation begins. This is Translation initiation factor IF-3 from Pseudomonas syringae pv. tomato (strain ATCC BAA-871 / DC3000).